The primary structure comprises 816 residues: MRYDFSTIEKKWQSFWLKNNSFSSGESTDKPKYYVLDMFPYPSGSGLHVGHLEGYTATDIVARYKRSCGYNVLHPMGWDAFGLPAEQFAIKTGTHPKNTTEKNISSFRETLQAMGFSYDWSREINTTSPDYFRWTQWIFIKLYELGLAYVSEVDINWCEELKTVLANEEVEEKVKEGYTVIRKPLRQWVLKITAYAERLLDDLDELDWPENVKQMQRNWIGRSEGMEIDFELRCHNRKLRVYTTRPDTLFGATFLVISPEHPLALKLATAQQLVAVTQYIKEAKLKSELERTGLQKDKTGIFTGSFAINPATGDPLPVWISDFVLTSYGTGAIMSVPAHDSRDWEFAKKFGLPIIEVIKSPDGVDDAAFEGKESVSINSSNPEISIDGLHFSEAFQIMAHWLETKGLGERKVTYKLRDWIFSRQRYWGEPIPVKHYEDGSIRTESNLPLQLPEVEAYQPSETGESPLATMHDWLYGADEFGSFRRETNTMPQWAGSCWYYLRFIDPENNAQLIDPAKEKYWMNVDLYIGGAEHAVLHLLYARFWHKVLYDLGVVSSREPFKKLFNQGMILGEDNEKMSKSRGNVIPADQVLKDYGADAVRLYEMFLGPLEQVKPWNTNGIEGISRFLGKVWRLVYPDSENPDQRDQAAVLDENPLPEILQRRMHKTIKKVTEDTDHLKFNTAISEMMVFVNELQKNGCRQKSAVENLLLMLAPYAPHITAELWQAIGHTSPISAEPFPVFDPAIAEDPVVTIAVQVNGKLRGRFTAPAKSPEESLVDMAKHVDTVIKFLEGQTIVKEIVIQDKLVNFAVKQSIPNH.

Positions 40–51 (PYPSGSGLHVGH) match the 'HIGH' region motif. The short motif at 576–580 (KMSKS) is the 'KMSKS' region element. Residue lysine 579 coordinates ATP.

It belongs to the class-I aminoacyl-tRNA synthetase family.

It localises to the cytoplasm. It catalyses the reaction tRNA(Leu) + L-leucine + ATP = L-leucyl-tRNA(Leu) + AMP + diphosphate. In Chlorobium phaeobacteroides (strain DSM 266 / SMG 266 / 2430), this protein is Leucine--tRNA ligase.